The sequence spans 232 residues: Acyl-protein thioesterase 1 (232 aa).

Residues serine 125, aspartate 179, and histidine 212 each act as charge relay system in the active site.

Belongs to the AB hydrolase superfamily. AB hydrolase 2 family.

It localises to the cytoplasm. Its subcellular location is the nucleus. The catalysed reaction is S-hexadecanoyl-L-cysteinyl-[protein] + H2O = L-cysteinyl-[protein] + hexadecanoate + H(+). Functionally, hydrolyzes fatty acids from S-acylated cysteine residues in proteins with a strong preference for palmitoylated G-alpha proteins over other acyl substrates. Mediates the deacylation of G-alpha proteins such as GPA1 in vivo, but has weak or no activity toward palmitoylated Ras proteins. Has weak lysophospholipase activity in vitro; however such activity may not exist in vivo. The chain is Acyl-protein thioesterase 1 from Debaryomyces hansenii (strain ATCC 36239 / CBS 767 / BCRC 21394 / JCM 1990 / NBRC 0083 / IGC 2968) (Yeast).